The primary structure comprises 406 residues: MANVLDELLERGYIKQFTHEEETRKLLENEKITFYIGFDPTADSLHVGHFIAMMFMAHMQRAGHRPIALIGGGTAMVGDPSGKTDMRKMLTKEDIQHNVDSIKKQMERFIDFSDGKAILANNADWLLNLNYVDFLREVGVHFSVNRMLTAECFKQRLEKGLSFLEFNYMLMQGYDFYELNQKYNCKMQLGGDDQWSNMIAGVELVRRKAQGEAMAMTCTLLTNSQGQKMGKTVGGALWLDPAKTSPYDFYQYWRNVDDADVEKCLALLTFLPMDEVRRLGALEGAEINGAKKVLAYEITKLVHGEEEAKKAEEAATALFAGGADMSNVPTVTIAKEEIGLPILDVMASTKIIPSKKEGRRLIEQGGLSINGVKVEGVNRILTEEDFQDGAVLIKRGKKNYNKIEIK.

Tyrosine 35 contacts L-tyrosine. Residues 40–49 (PTADSLHVGH) carry the 'HIGH' region motif. Residues tyrosine 168 and glutamine 172 each contribute to the L-tyrosine site. The 'KMSKS' region signature appears at 228-232 (KMGKT). Lysine 231 is an ATP binding site. An S4 RNA-binding domain is found at 340–404 (LPILDVMAST…RGKKNYNKIE (65 aa)).

Belongs to the class-I aminoacyl-tRNA synthetase family. TyrS type 1 subfamily. In terms of assembly, homodimer.

The protein resides in the cytoplasm. It carries out the reaction tRNA(Tyr) + L-tyrosine + ATP = L-tyrosyl-tRNA(Tyr) + AMP + diphosphate + H(+). Its function is as follows. Catalyzes the attachment of tyrosine to tRNA(Tyr) in a two-step reaction: tyrosine is first activated by ATP to form Tyr-AMP and then transferred to the acceptor end of tRNA(Tyr). The polypeptide is Tyrosine--tRNA ligase (Clostridium beijerinckii (strain ATCC 51743 / NCIMB 8052) (Clostridium acetobutylicum)).